A 161-amino-acid chain; its full sequence is Nucleotide-binding protein PputW619_0959 (161 aa).

The protein belongs to the YajQ family.

Nucleotide-binding protein. The chain is Nucleotide-binding protein PputW619_0959 from Pseudomonas putida (strain W619).